Reading from the N-terminus, the 214-residue chain is Probable transaldolase (214 aa).

Lysine 83 functions as the Schiff-base intermediate with substrate in the catalytic mechanism.

Belongs to the transaldolase family. Type 3B subfamily.

The protein localises to the cytoplasm. It carries out the reaction D-sedoheptulose 7-phosphate + D-glyceraldehyde 3-phosphate = D-erythrose 4-phosphate + beta-D-fructose 6-phosphate. It functions in the pathway carbohydrate degradation; pentose phosphate pathway; D-glyceraldehyde 3-phosphate and beta-D-fructose 6-phosphate from D-ribose 5-phosphate and D-xylulose 5-phosphate (non-oxidative stage): step 2/3. Functionally, transaldolase is important for the balance of metabolites in the pentose-phosphate pathway. The chain is Probable transaldolase from Maridesulfovibrio salexigens (strain ATCC 14822 / DSM 2638 / NCIMB 8403 / VKM B-1763) (Desulfovibrio salexigens).